Consider the following 1407-residue polypeptide: DNA-directed RNA polymerase subunit beta' (1407 aa).

Residues Cys-70, Cys-72, Cys-85, and Cys-88 each coordinate Zn(2+). The Mg(2+) site is built by Asp-460, Asp-462, and Asp-464. Residues Cys-814, Cys-888, Cys-895, and Cys-898 each contribute to the Zn(2+) site.

This sequence belongs to the RNA polymerase beta' chain family. The RNAP catalytic core consists of 2 alpha, 1 beta, 1 beta' and 1 omega subunit. When a sigma factor is associated with the core the holoenzyme is formed, which can initiate transcription. Mg(2+) serves as cofactor. The cofactor is Zn(2+).

The catalysed reaction is RNA(n) + a ribonucleoside 5'-triphosphate = RNA(n+1) + diphosphate. In terms of biological role, DNA-dependent RNA polymerase catalyzes the transcription of DNA into RNA using the four ribonucleoside triphosphates as substrates. This Salmonella arizonae (strain ATCC BAA-731 / CDC346-86 / RSK2980) protein is DNA-directed RNA polymerase subunit beta'.